Reading from the N-terminus, the 82-residue chain is Diphthamide biosynthesis protein 3 (82 aa).

Residues 4–60 enclose the DPH-type MB domain; the sequence is FHDEVEIEDFQYDEDSETYFYPCPCGDNFSITKEDLENGEDVATCPSCSLIIKVIYD. Cysteine 26, cysteine 28, cysteine 48, and cysteine 51 together coordinate Fe cation.

It belongs to the DPH3 family. Component of the 2-(3-amino-3-carboxypropyl)histidine synthase complex composed of DPH1, DPH2, DPH3 and a NADH-dependent reductase. Interacts with SERGEF. The cofactor is Fe(2+).

Its subcellular location is the cytoplasm. The protein resides in the nucleus. The enzyme catalyses [3Fe-4S](1+)-[protein] + Fe(2+)-[Dph3] = [3Fe-4S](0)-[protein] + Fe(3+)-[Dph3]. It carries out the reaction 2 [3Fe-4S](0)-[protein] + 2 Fe(2+)-[Dph3] + NADH = 2 [4Fe-4S](1+)-[protein] + 2 [Dph3] + NAD(+) + H(+). It participates in protein modification; peptidyl-diphthamide biosynthesis. Functionally, required for the first step of diphthamide biosynthesis, a post-translational modification of histidine which occurs in elongation factor 2. DPH1 and DPH2 transfer a 3-amino-3-carboxypropyl (ACP) group from S-adenosyl-L-methionine (SAM) to a histidine residue, the reaction is assisted by a reduction system comprising DPH3 and a NADH-dependent reductase. Acts as an electron donor to reduce the Fe-S cluster in DPH1-DPH2 keeping the [4Fe-4S] clusters in the active and reduced state. Restores iron to DPH1-DPH2 iron-sulfur clusters which have degraded from [4Fe-4S] to [3Fe-4S] by donating an iron atom to reform [4Fe-4S] clusters, in a manner dependent on the presence of elongation factor 2 and SAM. Associates with the elongator complex and is required for tRNA Wobble base modifications mediated by the elongator complex. The elongator complex is required for multiple tRNA modifications, including mcm5U (5-methoxycarbonylmethyl uridine), mcm5s 2U (5-methoxycarbonylmethyl-2-thiouridine), and ncm5U (5-carbamoylmethyl uridine). In Cricetulus griseus (Chinese hamster), this protein is Diphthamide biosynthesis protein 3 (DPH3).